Here is a 233-residue protein sequence, read N- to C-terminus: Auxin-responsive protein IAA11 (233 aa).

2 disordered regions span residues 1–27 and 46–100; these read MAGL…RSSG and PAAV…PKAQ. Residues 11-15 carry the EAR-like (transcriptional repression) motif; that stretch reads LRLGL. The segment covering 54–63 has biased composition (acidic residues); that stretch reads GAQEDKEDAD. The 96-residue stretch at 122–217 folds into the PB1 domain; that stretch reads AALVKVSMDG…SCKRLRIMKG (96 aa).

It belongs to the Aux/IAA family. In terms of assembly, homodimers and heterodimers. In terms of tissue distribution, highly expressed in etiolated shoots. Expressed in roots.

Its subcellular location is the nucleus. Aux/IAA proteins are short-lived transcriptional factors that function as repressors of early auxin response genes at low auxin concentrations. This chain is Auxin-responsive protein IAA11 (IAA11), found in Oryza sativa subsp. japonica (Rice).